The following is a 617-amino-acid chain: MAFPHRLDAPELPDFSMLKRLARDQLIYLLEQLPGKKDLFIEADLMSPLDRIANVSILKQHEVDKLYKVENKLTLSSNEQLCFLVRPRIKTMRYIANLVNADKLAGRVRKYKIILSPQKFYACEMVLEEEGVYGDVSCDEWAFSLLPLDVDLLSMELPEFFRDYFLEGDQRWINTVAQALHLLSTLYGPFPNCYGIGRCTKMSYDLWRKLEEEEDSETKGRRPEIGHIFLLDRDVDFVTALCSQVVYEGLVDDTFRIKCGSVDFGPEVTSSDKSLKVLLNAEDKVFSEIRNEHFSNVFGFLSQKARNLQAQYDRRRGMDIKQMKNFVSQELKGLKQEHRLLSLHIGACESIMKKKTKQDFQELIKTEHALLEGFNIRESTSYIEEHIDRQVSPIESLRLMCLLSITENGLIPKDYRSLKTQYLQSYGPEHLLTFSNLRRAGLLTEQASGDTLTAVENKVSKLVTDKAAGKITDAFSSLAKRSNFRAISKKLNLIPRVDGEYDLKVPRDMAYVFSGAYVPLSCRIIEQVLDRRSWQGLDEVVRLLNCSDFAFTDMAKEDKASSESLRLILVVFLGGCTFSEISALRFLGREKGYRFIFLTTAVTNSARLMEAMSEVKS.

Residue A2 is modified to N-acetylalanine.

Belongs to the STXBP/unc-18/SEC1 family. In terms of assembly, interacts with RAB11A and VIPAS39. Associates with adaptor protein complex 3 (AP-3), clathrin:AP-3 and clathrin:HGS complexes. Post-translationally, phosphorylated on tyrosine residues. As to expression, ubiquitous.

It localises to the late endosome membrane. The protein resides in the lysosome membrane. Its subcellular location is the early endosome. It is found in the cytoplasmic vesicle. The protein localises to the clathrin-coated vesicle. It localises to the recycling endosome. Functionally, may play a role in vesicle-mediated protein trafficking to lysosomal compartments and in membrane docking/fusion reactions of late endosomes/lysosomes. Mediates phagolysosomal fusion in macrophages. Proposed to be involved in endosomal maturation implicating VIPAS39. In epithelial cells, the VPS33B:VIPAS39 complex may play a role in the apical recycling pathway and in the maintenance of the apical-basolateral polarity. Seems to be involved in the sorting of specific cargos from the trans-Golgi network to alpha-granule-destined multivesicular bodies (MVBs) promoting MVBs maturation in megakaryocytes. The polypeptide is Vacuolar protein sorting-associated protein 33B (Vps33b) (Rattus norvegicus (Rat)).